The primary structure comprises 119 residues: Putative membrane protein insertion efficiency factor (119 aa).

It belongs to the UPF0161 family.

The protein localises to the cell inner membrane. Its function is as follows. Could be involved in insertion of integral membrane proteins into the membrane. This chain is Putative membrane protein insertion efficiency factor, found in Brucella anthropi (strain ATCC 49188 / DSM 6882 / CCUG 24695 / JCM 21032 / LMG 3331 / NBRC 15819 / NCTC 12168 / Alc 37) (Ochrobactrum anthropi).